The primary structure comprises 405 residues: NADH-quinone oxidoreductase subunit D (405 aa).

This sequence belongs to the complex I 49 kDa subunit family. As to quaternary structure, NDH-1 is composed of 14 different subunits. Subunits NuoB, C, D, E, F, and G constitute the peripheral sector of the complex.

It localises to the cell inner membrane. It carries out the reaction a quinone + NADH + 5 H(+)(in) = a quinol + NAD(+) + 4 H(+)(out). In terms of biological role, NDH-1 shuttles electrons from NADH, via FMN and iron-sulfur (Fe-S) centers, to quinones in the respiratory chain. The immediate electron acceptor for the enzyme in this species is believed to be ubiquinone. Couples the redox reaction to proton translocation (for every two electrons transferred, four hydrogen ions are translocated across the cytoplasmic membrane), and thus conserves the redox energy in a proton gradient. The protein is NADH-quinone oxidoreductase subunit D of Leptospira borgpetersenii serovar Hardjo-bovis (strain L550).